Consider the following 364-residue polypeptide: Photoreceptor outer segment membrane glycoprotein 2 (364 aa).

Over 1 to 24 (MTVLKVKFTKTKRDKLAQILWILN) the chain is Cytoplasmic. A helical membrane pass occupies residues 25–43 (WVSVVSGIILFSLGLFLKI). The Lumenal segment spans residues 44–61 (EIKKRNEVMAKGDINSVP). A helical transmembrane segment spans residues 62–80 (NMLISVGVIACVVNFLGGK). Topologically, residues 81–99 (ICYDCSDANKFSRWKLIML) are cytoplasmic. A helical membrane pass occupies residues 100–123 (PYIICTFCFTFCILLGALMCYTMR). Topologically, residues 124 to 264 (NELEESLYLG…LEYYTAIMRS (141 aa)) are lumenal. Residue asparagine 229 is glycosylated (N-linked (GlcNAc...) asparagine). The helical transmembrane segment at 265–290 (IGIAALLIWLFELSVLIGVRYLQTAM) threads the bilayer. The Cytoplasmic segment spans residues 291–364 (KNVLLQGDLQ…VTAKSIPAAS (74 aa)).

The protein belongs to the PRPH2/ROM1 family.

The protein resides in the membrane. This is Photoreceptor outer segment membrane glycoprotein 2 from Gallus gallus (Chicken).